The chain runs to 239 residues: tRNA (guanine-N(1)-)-methyltransferase (239 aa).

S-adenosyl-L-methionine contacts are provided by residues glycine 108 and 127–132 (LGDFVL).

Belongs to the RNA methyltransferase TrmD family. Homodimer.

It is found in the cytoplasm. The enzyme catalyses guanosine(37) in tRNA + S-adenosyl-L-methionine = N(1)-methylguanosine(37) in tRNA + S-adenosyl-L-homocysteine + H(+). In terms of biological role, specifically methylates guanosine-37 in various tRNAs. This chain is tRNA (guanine-N(1)-)-methyltransferase, found in Streptococcus pyogenes serotype M6 (strain ATCC BAA-946 / MGAS10394).